We begin with the raw amino-acid sequence, 61 residues long: Metallothionein-2A (61 aa).

Met1 bears the N-acetylmethionine mark. Positions Met1–Cys29 are beta. Cys5, Cys7, Cys13, Cys15, Cys19, Cys21, Cys24, Cys26, Cys29, Cys33, Cys34, Cys36, Cys37, Cys41, Cys44, Cys48, Cys50, and Cys57 together coordinate a divalent metal cation. The alpha stretch occupies residues Lys30 to Ala61. The residue at position 58 (Ser58) is a Phosphoserine. Positions 59 and 60 each coordinate a divalent metal cation.

Belongs to the metallothionein superfamily. Type 1 family. Interacts with EOLA1.

Functionally, metallothioneins have a high content of cysteine residues that bind various heavy metals; these proteins are transcriptionally regulated by both heavy metals and glucocorticoids. This Sus scrofa (Pig) protein is Metallothionein-2A (MT2A).